We begin with the raw amino-acid sequence, 393 residues long: Heparan sulfate glucosamine 3-O-sulfotransferase 3A1 (393 aa).

Residues 1–24 (MAPSGPTGAQPSPAEPLSRSIFRK) are Cytoplasmic-facing. A helical; Signal-anchor for type II membrane protein transmembrane segment spans residues 25 to 43 (FLLMLCSLLTSLYVFYCLA). Topologically, residues 44–393 (ERCPPGSGPV…MTGRDFGWDG (350 aa)) are lumenal. The interval 85–121 (QRRRRGRSGPGDSSDQEEQSPGLAAAPGGSGAGSSVA) is disordered. 149–153 (KGGTR) contacts 3'-phosphoadenylyl sulfate. Residues 171 to 177 (EPHFFDR) and 202 to 205 (KTPS) contribute to the substrate site. 3'-phosphoadenylyl sulfate contacts are provided by arginine 230 and serine 238. Asparagine 260 carries an N-linked (GlcNAc...) asparagine glycan. Substrate is bound at residue 270–271 (WS). Asparagine 331 carries an N-linked (GlcNAc...) asparagine glycan. Cysteine 338 and cysteine 350 form a disulfide bridge. 355-359 (KGRAH) lines the 3'-phosphoadenylyl sulfate pocket.

It belongs to the sulfotransferase 1 family.

It localises to the golgi apparatus membrane. The enzyme catalyses alpha-D-glucosaminyl-[heparan sulfate](n) + 3'-phosphoadenylyl sulfate = 3-sulfo-alpha-D-glucosaminyl-[heparan sulfate](n) + adenosine 3',5'-bisphosphate + H(+). In terms of biological role, sulfotransferase that utilizes 3'-phospho-5'-adenylyl sulfate (PAPS) to catalyze the transfer of a sulfo group to an N-unsubstituted glucosamine linked to a 2-O-sulfo iduronic acid unit on heparan sulfate. Catalyzes the O-sulfation of glucosamine in IdoUA2S-GlcNS and also in IdoUA2S-GlcNH2. Unlike HS3ST1/3-OST-1, does not convert non-anticoagulant heparan sulfate to anticoagulant heparan sulfate. The protein is Heparan sulfate glucosamine 3-O-sulfotransferase 3A1 (Hs3st3a1) of Mus musculus (Mouse).